The chain runs to 302 residues: uncharacterized protein (302 aa).

Its function is as follows. May be a membrane-bound protein, possibly involved in IAA or IAA-Lysine transport. This is an uncharacterized protein from Pseudomonas savastanoi (Pseudomonas syringae pv. savastanoi).